Here is a 435-residue protein sequence, read N- to C-terminus: RuBisCO large subunit-binding protein subunit beta-1 (435 aa).

The protein belongs to the chaperonin (HSP60) family. As to quaternary structure, oligomer of probably six alpha and six beta subunits.

Its subcellular location is the plastid. It is found in the chloroplast. Its function is as follows. This protein binds RuBisCO small and large subunits and is implicated in the assembly of the enzyme oligomer. The chain is RuBisCO large subunit-binding protein subunit beta-1 from Chlamydomonas reinhardtii (Chlamydomonas smithii).